Here is a 65-residue protein sequence, read N- to C-terminus: U12-theraphotoxin-Cg1a (65 aa).

Residues 1 to 21 form the signal peptide; it reads MKTSVLLFMLGLTFLFDGLAA. A propeptide spanning residues 22 to 29 is cleaved from the precursor; it reads INLQEGER. 3 disulfide bridges follow: Cys31/Cys45, Cys38/Cys50, and Cys44/Cys57.

It belongs to the neurotoxin 10 (Hwtx-1) family. 31 (Jztx-15) subfamily. As to expression, expressed by the venom gland.

Its subcellular location is the secreted. Probable ion channel inhibitor. The polypeptide is U12-theraphotoxin-Cg1a (Chilobrachys guangxiensis (Chinese earth tiger tarantula)).